A 2486-amino-acid polypeptide reads, in one-letter code: Nonribosomal peptide synthetase nanA (2486 aa).

Positions 231 to 637 (FSARQPLSPA…GRRGTQVKLR (407 aa)) are adenylation 1. Residues 786–860 (TDIELKVHAL…DLARSAKETS (75 aa)) enclose the Carrier 1 domain. Serine 820 is subject to O-(pantetheine 4'-phosphoryl)serine. The condensation 1 stretch occupies residues 902–1314 (EDAYPCTPLQ…LKSVPRVSSQ (413 aa)). Residues 1339 to 1735 (RAQARKTPLA…GRIGDQMKIR (397 aa)) are adenylation 2. 2 Carrier domains span residues 1872–1948 (PPST…SSAS) and 2404–2480 (SSSE…QTQA). 2 positions are modified to O-(pantetheine 4'-phosphoryl)serine: serine 1909 and serine 2441. Positions 2404-2480 (SSSETIVEPL…KLARLLQTQA (77 aa)) are condensation 2.

The protein belongs to the NRP synthetase family.

It participates in secondary metabolite biosynthesis. Nonribosomal peptide synthetase; part of the gene cluster that mediates the biosynthesis of the benzazepine alkaloid nanangelenin A which contains an unprecedented 3,4-dihydro-1-benzazepine-2,5-dione-N-prenyl-N-acetoxy-anthranilamide scaffold. The first step of nanangelenin biosynthesis is catalyzed by the indoleamine 2,3-dioxygenase nanC which produces N-formyl-kynurenine through the catabolism of tryptophan. The two-module NRPS nanA then utilizes anthranilate (Ant) and L-kynurenine (L-Kyn) to assemble the dipeptide product nanangelenin B. The first adenylation domain of nanA (A1) loads anthranilate onto the T1 domain, while A2 loads kynurenine, generated through spontaneous nonenzymatic deformylation of the nanC-supplied N-formyl-kynurenine. The peptide bond formation between the tethered amino acids is catalyzed by the first condensation domain (C1) between anthranilate's carbonyl carbon and kynurenine's aliphatic primary amine. The second C domain (C2) catalyzes the final cyclization event between the aromatic amine of kynurenine and the tethered carbonyl carbon, yielding nanangelenin B. The terminal T3 domain enhances the catalytic efficiency of C2, suggesting the T2-tethered Ant-L-Kyn is transferred to T3 prior to cyclization by C2. Once released from nanA, nanangelenin B is then prenylated by the prenyltransferase nanD to form nanangelenin C. Nanangelenin C is then N-hydroxylated by the FAD-dependent monooxygenase nanF and further acetylated by the acetyltransferase nanB to yield nanangelenin F. Finally, the N-methyltransferase nanE methylates the amide nitrogen of 1-benzazepine to convert nanangelenin F into nanangelenin A. NanE is also able to methylate most of the intermediates of the pathway such as nanangelenin B and nanangelenin C to produce nanangelenin D and nanangelenin E, respectively. The protein is Nonribosomal peptide synthetase nanA of Aspergillus nanangensis.